Reading from the N-terminus, the 187-residue chain is Large ribosomal subunit protein uL5 (187 aa).

This sequence belongs to the universal ribosomal protein uL5 family. As to quaternary structure, part of the 50S ribosomal subunit; part of the 5S rRNA/L5/L18/L25 subcomplex. Contacts the 5S rRNA and the P site tRNA. Forms a bridge to the 30S subunit in the 70S ribosome.

In terms of biological role, this is one of the proteins that bind and probably mediate the attachment of the 5S RNA into the large ribosomal subunit, where it forms part of the central protuberance. In the 70S ribosome it contacts protein S13 of the 30S subunit (bridge B1b), connecting the 2 subunits; this bridge is implicated in subunit movement. Contacts the P site tRNA; the 5S rRNA and some of its associated proteins might help stabilize positioning of ribosome-bound tRNAs. This chain is Large ribosomal subunit protein uL5, found in Mycobacteroides abscessus (strain ATCC 19977 / DSM 44196 / CCUG 20993 / CIP 104536 / JCM 13569 / NCTC 13031 / TMC 1543 / L948) (Mycobacterium abscessus).